The following is a 104-amino-acid chain: Large ribosomal subunit protein uL24 (104 aa).

It belongs to the universal ribosomal protein uL24 family. As to quaternary structure, part of the 50S ribosomal subunit.

One of two assembly initiator proteins, it binds directly to the 5'-end of the 23S rRNA, where it nucleates assembly of the 50S subunit. In terms of biological role, one of the proteins that surrounds the polypeptide exit tunnel on the outside of the subunit. The protein is Large ribosomal subunit protein uL24 of Yersinia pseudotuberculosis serotype O:1b (strain IP 31758).